A 70-amino-acid polypeptide reads, in one-letter code: DNA-directed RNA polymerase subunit omega (70 aa).

It belongs to the RNA polymerase subunit omega family. The RNAP catalytic core consists of 2 alpha, 1 beta, 1 beta' and 1 omega subunit. When a sigma factor is associated with the core the holoenzyme is formed, which can initiate transcription.

It catalyses the reaction RNA(n) + a ribonucleoside 5'-triphosphate = RNA(n+1) + diphosphate. In terms of biological role, promotes RNA polymerase assembly. Latches the N- and C-terminal regions of the beta' subunit thereby facilitating its interaction with the beta and alpha subunits. The sequence is that of DNA-directed RNA polymerase subunit omega from Methylobacillus flagellatus (strain ATCC 51484 / DSM 6875 / VKM B-1610 / KT).